A 78-amino-acid polypeptide reads, in one-letter code: Pro-glucagon (78 aa).

The protein belongs to the glucagon family.

The protein localises to the secreted. In terms of biological role, plays a key role in glucose metabolism and homeostasis. Regulates blood glucose by increasing gluconeogenesis and decreasing glycolysis. In Atractosteus spatula (Alligator gar), this protein is Pro-glucagon (gcg).